Reading from the N-terminus, the 145-residue chain is Peptide methionine sulfoxide reductase MsrB (145 aa).

Residues 6–129 (KNERLQQLTD…NSAALRFIPV (124 aa)) enclose the MsrB domain. Catalysis depends on Cys118, which acts as the Nucleophile.

It belongs to the MsrB Met sulfoxide reductase family.

The catalysed reaction is L-methionyl-[protein] + [thioredoxin]-disulfide + H2O = L-methionyl-(R)-S-oxide-[protein] + [thioredoxin]-dithiol. In Listeria monocytogenes serotype 4b (strain CLIP80459), this protein is Peptide methionine sulfoxide reductase MsrB.